We begin with the raw amino-acid sequence, 359 residues long: MSVLDRLGQKLLFAFDPETAHGLSIAALRCGLPAGTRAVRDIRLKVSLCGLDFPNPLGMAAGYDKDAEVPDALLGLGFGFAEVGTVTPLPQAGNPKPRIFRLTADEAVINRLGFNNEGHAAAEKRLAARKGRPGIVGVNIGANKDSADRIGDYERGVGRFARHASYLTVNISSPNTPGLRNMQAREQLGELLSRVMAARASAATQPPIFLKIAPDLVEAELEDIAAEVVEKRIDGIIVSNTTISRPPLRSGDVGRETGGLSGKPLFERSTIVLAKMRKLLGPGIAIIGVGGVDSAETALEKIRAGADLVQLYTGMIYAGPALPGRIVAGMARFCETERLKSIGELRDSHLDRWASKPLS.

FMN-binding positions include 61–65 and Thr-85; that span reads AGYDK. Lys-65 lines the substrate pocket. 110–114 serves as a coordination point for substrate; the sequence is NRLGF. Residues Asn-139 and Asn-170 each coordinate FMN. Residue Asn-170 participates in substrate binding. Ser-173 acts as the Nucleophile in catalysis. Substrate is bound at residue Asn-175. FMN-binding residues include Lys-211 and Ser-239. Substrate is bound at residue 240–241; sequence NT. FMN-binding positions include Gly-262, Gly-291, and 312–313; that span reads YT.

Belongs to the dihydroorotate dehydrogenase family. Type 2 subfamily. Monomer. The cofactor is FMN.

The protein localises to the cell membrane. The catalysed reaction is (S)-dihydroorotate + a quinone = orotate + a quinol. It participates in pyrimidine metabolism; UMP biosynthesis via de novo pathway; orotate from (S)-dihydroorotate (quinone route): step 1/1. Functionally, catalyzes the conversion of dihydroorotate to orotate with quinone as electron acceptor. In Mesorhizobium japonicum (strain LMG 29417 / CECT 9101 / MAFF 303099) (Mesorhizobium loti (strain MAFF 303099)), this protein is Dihydroorotate dehydrogenase (quinone).